The primary structure comprises 73 residues: Translational regulator CsrA (73 aa).

The tract at residues 54 to 73 is disordered; it reads ENRAASDSPWSPNSLPQLPV. Positions 61 to 73 are enriched in polar residues; it reads SPWSPNSLPQLPV.

Belongs to the CsrA/RsmA family. As to quaternary structure, homodimer; the beta-strands of each monomer intercalate to form a hydrophobic core, while the alpha-helices form wings that extend away from the core.

It is found in the cytoplasm. A translational regulator that binds mRNA to regulate translation initiation and/or mRNA stability. Usually binds in the 5'-UTR at or near the Shine-Dalgarno sequence preventing ribosome-binding, thus repressing translation. Its main target seems to be the major flagellin gene, while its function is anatagonized by FliW. This Treponema pallidum (strain Nichols) protein is Translational regulator CsrA.